The sequence spans 219 residues: Leucyl/phenylalanyl-tRNA--protein transferase (219 aa).

The protein belongs to the L/F-transferase family.

The protein localises to the cytoplasm. It carries out the reaction N-terminal L-lysyl-[protein] + L-leucyl-tRNA(Leu) = N-terminal L-leucyl-L-lysyl-[protein] + tRNA(Leu) + H(+). The enzyme catalyses N-terminal L-arginyl-[protein] + L-leucyl-tRNA(Leu) = N-terminal L-leucyl-L-arginyl-[protein] + tRNA(Leu) + H(+). It catalyses the reaction L-phenylalanyl-tRNA(Phe) + an N-terminal L-alpha-aminoacyl-[protein] = an N-terminal L-phenylalanyl-L-alpha-aminoacyl-[protein] + tRNA(Phe). Its function is as follows. Functions in the N-end rule pathway of protein degradation where it conjugates Leu, Phe and, less efficiently, Met from aminoacyl-tRNAs to the N-termini of proteins containing an N-terminal arginine or lysine. The polypeptide is Leucyl/phenylalanyl-tRNA--protein transferase (Leptospira borgpetersenii serovar Hardjo-bovis (strain JB197)).